Consider the following 107-residue polypeptide: Snaclec VP12 subunit A (107 aa).

Cystine bridges form between C4–C15 and C32–C107. Residues 11–107 form the C-type lectin domain; it reads YEGNCYKAFD…ECGLAYPFIC (97 aa).

Belongs to the snaclec family. As to quaternary structure, heterodimer of subunits alpha and beta; disulfide-linked. In terms of tissue distribution, expressed by the venom gland.

It is found in the secreted. Inhibits integrin alpha-2/beta-1- (ITGA2/ITGB1) dependent melanoma metastasis. The chain is Snaclec VP12 subunit A from Daboia palaestinae (Palestine viper).